A 120-amino-acid polypeptide reads, in one-letter code: MRLPAQLLGLLMLWIPGSSADIVMTQTPLSLSVTPGQPASISCKSSQSLLHSDGKTYLYWYLQKPGQSPQLLIYEVSSRFSGVPDRFSGSGSGTDFTLKISRVEAEDVGVYYCMQGIHLP.

The N-terminal stretch at 1–20 (MRLPAQLLGLLMLWIPGSSA) is a signal peptide. The tract at residues 21–43 (DIVMTQTPLSLSVTPGQPASISC) is framework-1. The Ig-like domain occupies 21–120 (DIVMTQTPLS…YYCMQGIHLP (100 aa)). An intrachain disulfide couples cysteine 43 to cysteine 113. The complementarity-determining-1 stretch occupies residues 44 to 59 (KSSQSLLHSDGKTYLY). A framework-2 region spans residues 60 to 74 (WYLQKPGQSPQLLIY). Residues 75–81 (EVSSRFS) are complementarity-determining-2. The segment at 82–113 (GVPDRFSGSGSGTDFTLKISRVEAEDVGVYYC) is framework-3. The segment at 114–120 (MQGIHLP) is complementarity-determining-3.

Immunoglobulins are composed of two identical heavy chains and two identical light chains; disulfide-linked.

Its subcellular location is the secreted. The protein resides in the cell membrane. Its function is as follows. V region of the variable domain of immunoglobulin light chains that participates in the antigen recognition. Immunoglobulins, also known as antibodies, are membrane-bound or secreted glycoproteins produced by B lymphocytes. In the recognition phase of humoral immunity, the membrane-bound immunoglobulins serve as receptors which, upon binding of a specific antigen, trigger the clonal expansion and differentiation of B lymphocytes into immunoglobulins-secreting plasma cells. Secreted immunoglobulins mediate the effector phase of humoral immunity, which results in the elimination of bound antigens. The antigen binding site is formed by the variable domain of one heavy chain, together with that of its associated light chain. Thus, each immunoglobulin has two antigen binding sites with remarkable affinity for a particular antigen. The variable domains are assembled by a process called V-(D)-J rearrangement and can then be subjected to somatic hypermutations which, after exposure to antigen and selection, allow affinity maturation for a particular antigen. The polypeptide is Immunoglobulin kappa variable 2-29 (Homo sapiens (Human)).